The following is a 582-amino-acid chain: ATP-dependent lipid A-core flippase (582 aa).

Transmembrane regions (helical) follow at residues 23–43 (AAFI…TLFL), 61–81 (ILLY…SLNV), 140–160 (AVLV…LMFY), 163–183 (WQLS…VGVV), 247–267 (AIST…VLVI), and 273–293 (MLGE…IMLL). Residues 26–308 (IAAILCMIGY…LTNVNSDFQR (283 aa)) form the ABC transmembrane type-1 domain. In terms of domain architecture, ABC transporter spans 340 to 576 (IVFDDVTFSY…EGAYFQLHNL (237 aa)). 374 to 381 (GRSGSGKS) contributes to the ATP binding site.

The protein belongs to the ABC transporter superfamily. Lipid exporter (TC 3.A.1.106) family. In terms of assembly, homodimer.

The protein resides in the cell inner membrane. It catalyses the reaction ATP + H2O + lipid A-core oligosaccharideSide 1 = ADP + phosphate + lipid A-core oligosaccharideSide 2.. Functionally, involved in lipopolysaccharide (LPS) biosynthesis. Translocates lipid A-core from the inner to the outer leaflet of the inner membrane. Transmembrane domains (TMD) form a pore in the inner membrane and the ATP-binding domain (NBD) is responsible for energy generation. This Idiomarina loihiensis (strain ATCC BAA-735 / DSM 15497 / L2-TR) protein is ATP-dependent lipid A-core flippase.